The chain runs to 338 residues: RAB6-interacting golgin (338 aa).

2 stretches are compositionally biased toward basic and acidic residues: residues 1 to 14 and 46 to 59; these read MTEKFNGFSHDEIL and RMPDKIFRQADQLR. Disordered regions lie at residues 1-109 and 127-188; these read MTEK…LNLD and ARDK…SPFK. Composition is skewed to low complexity over residues 60–73 and 153–167; these read KQQQQQPQQPIQKP and SGGDSQTTSSTDDGS. A coiled-coil region spans residues 192-244; it reads LKDFEQHRRMIEEQNKQKKQMLYQAIEQHTQKTAAESRKIEEIRHELSKLESD. Positions 244 to 260 are essential for Sas-6 binding; sequence DLAVDVALLRKQIDNAC. The segment at 246–286 is necessary for localization to the centrosome; the sequence is AVDVALLRKQIDNACIHFANVEKQYVKIEAQFLRAKIELHN. The tract at residues 246–323 is necessary for localization to the Golgi; the sequence is AVDVALLRKQ…TELMQKVGLS (78 aa). Residues 260 to 286 form a necessary for interaction with Sas-6 and essential for homodimerization region; the sequence is CIHFANVEKQYVKIEAQFLRAKIELHN.

The protein belongs to the GORAB family. Homodimer (via C-terminus); dimerization appears to be required for its trans-Golgi localization but not for its function and centriolar localization. Interacts (via C-terminus) with Rab6; binds Rab6 as a homodimer, this interaction seems to be required for trans-Golgi localization. Interacts (via C-terminus) with Sas-6; binds as a monomer to a Sas-6 homodimer.

It is found in the cytoplasm. The protein resides in the cytoskeleton. It localises to the microtubule organizing center. The protein localises to the centrosome. Its subcellular location is the centriole. It is found in the golgi apparatus. The protein resides in the trans-Golgi network. Functionally, required for centriole duplication likely through its interaction with Sas-6. During embryogenesis, maternally provided protein is required for centrosome duplication and nuclear division cycles of the syncytial embryos. In femoral chordotonal organs, required for sensory cilia structural integrity and functionality necessary for motor coordination. In male germline, has a role in cytokinesis which seems dependent on its localization to the Golgi. This chain is RAB6-interacting golgin, found in Drosophila melanogaster (Fruit fly).